Here is a 381-residue protein sequence, read N- to C-terminus: Succinyl-diaminopimelate desuccinylase (381 aa).

A Zn(2+)-binding site is contributed by His-71. The active site involves Asp-73. A Zn(2+)-binding site is contributed by Asp-104. Glu-138 serves as the catalytic Proton acceptor. Zn(2+)-binding residues include Glu-139, Glu-167, and His-353.

This sequence belongs to the peptidase M20A family. DapE subfamily. As to quaternary structure, homodimer. The cofactor is Zn(2+). It depends on Co(2+) as a cofactor.

It carries out the reaction N-succinyl-(2S,6S)-2,6-diaminopimelate + H2O = (2S,6S)-2,6-diaminopimelate + succinate. Its pathway is amino-acid biosynthesis; L-lysine biosynthesis via DAP pathway; LL-2,6-diaminopimelate from (S)-tetrahydrodipicolinate (succinylase route): step 3/3. Catalyzes the hydrolysis of N-succinyl-L,L-diaminopimelic acid (SDAP), forming succinate and LL-2,6-diaminopimelate (DAP), an intermediate involved in the bacterial biosynthesis of lysine and meso-diaminopimelic acid, an essential component of bacterial cell walls. In Shewanella pealeana (strain ATCC 700345 / ANG-SQ1), this protein is Succinyl-diaminopimelate desuccinylase.